The chain runs to 976 residues: Alpha-amylase (976 aa).

An N-terminal signal peptide occupies residues 1 to 33 (MKRGKLWGRLVSAAGLSLSIFLSSIGNVSTAYA). Residues 45–98 (TKENTESATDASSNEASDAEADNDTDEAITDASSKELSAENDGASESDSSFDEY) form a disordered region. The span at 50–60 (ESATDASSNEA) shows a compositional bias: low complexity. Composition is skewed to acidic residues over residues 61-73 (SDAE…DEAI) and 87-96 (GASESDSSFD). Positions 243, 284, and 293 each coordinate Ca(2+). The active-site Nucleophile is the Asp-323. His-327 contacts Ca(2+). Glu-375 serves as the catalytic Proton donor.

It belongs to the glycosyl hydrolase 13 family. As to quaternary structure, monomer. Ca(2+) serves as cofactor.

It catalyses the reaction Endohydrolysis of (1-&gt;4)-alpha-D-glucosidic linkages in polysaccharides containing three or more (1-&gt;4)-alpha-linked D-glucose units.. The chain is Alpha-amylase (amyA) from Butyrivibrio fibrisolvens.